The chain runs to 652 residues: ATP-binding cassette sub-family G member 5 (652 aa).

The tract at residues 1 to 25 is disordered; the sequence is MGELPFLSPEGARGPHINRGSLSSL. Residues 1–384 lie on the Cytoplasmic side of the membrane; sequence MGELPFLSPE…RVTRNLMRNK (384 aa). In terms of domain architecture, ABC transporter spans 39–294; it reads LGVLHVSYSV…FNNCGYPCPE (256 aa). Cys61 carries S-palmitoyl cysteine lipidation. Position 87 to 94 (87 to 94) interacts with ATP; it reads GSSGSGKT. A helical transmembrane segment spans residues 385 to 405; it reads QAVIMRLVQNLIMGLFLIFYL. An ABC transmembrane type-2 domain is found at 389–646; sequence MRLVQNLIMG…ILGIVIFKVR (258 aa). Topologically, residues 406–422 are extracellular; that stretch reads LRVQNNTLKGAVQDRVG. Asn410 is a glycosylation site (N-linked (GlcNAc...) asparagine). The chain crosses the membrane as a helical span at residues 423-443; sequence LLYQLVGATPYTGMLNAVNLF. At 444–468 the chain is on the cytoplasmic side; sequence PMLRAVSDQESQDGLYHKWQMLLAY. A helical transmembrane segment spans residues 469–490; the sequence is VLHVLPFSVIATVIFSSVCYWT. Residues 491–501 lie on the Extracellular side of the membrane; sequence LGLYPEVARFG. The chain crosses the membrane as a helical span at residues 502 to 522; sequence YFSAALLAPHLIGEFLTLVLL. The Cytoplasmic segment spans residues 523–529; the sequence is GIVQNPN. The helical transmembrane segment at 530–550 threads the bilayer; that stretch reads IVNSIVALLSISGLLIGSGFI. Topologically, residues 551 to 624 are extracellular; sequence RNIQEMPIPL…PGATSRFTAN (74 aa). N-linked (GlcNAc...) asparagine glycosylation is found at Asn585 and Asn592. A helical membrane pass occupies residues 625–645; the sequence is FLILYGFIPALVILGIVIFKV. Residues 646-652 lie on the Cytoplasmic side of the membrane; that stretch reads RDYLISR.

Belongs to the ABC transporter superfamily. ABCG family. Eye pigment precursor importer (TC 3.A.1.204) subfamily. Heterodimer with ABCG8. Requires Mg(2+) as cofactor. In terms of processing, N-glycosylated. N-glycosylation is important for efficient export out of the endoplasmic reticulum. Detected in liver and jejunum. Detected on enterocyte villi (at protein level). Expressed in jejunum, ileum and, at lower level, in the liver.

It is found in the cell membrane. It localises to the apical cell membrane. The enzyme catalyses cholesterol(in) + ATP + H2O = cholesterol(out) + ADP + phosphate + H(+). It carries out the reaction sitosterol(in) + ATP + H2O = sitosterol(out) + ADP + phosphate + H(+). Its activity is regulated as follows. Cholesterol transport is inhibited by vanadate and by beryllium fluoride. Its function is as follows. ABCG5 and ABCG8 form an obligate heterodimer that mediates Mg(2+)- and ATP-dependent sterol transport across the cell membrane. Plays an essential role in the selective transport of dietary plant sterols and cholesterol in and out of the enterocytes and in the selective sterol excretion by the liver into bile. Required for normal sterol homeostasis. The heterodimer with ABCG8 has ATPase activity. The chain is ATP-binding cassette sub-family G member 5 from Mus musculus (Mouse).